A 147-amino-acid chain; its full sequence is MARTKQTARKATAWQAPRKPLATKAARKRASPTGGIKKPHRYKPGTLALREIRKYQKSTQLLLRKLPFQRLVREIAQAISPDLRFQSAAIGALQEASEAYLVQLFEDTNLCAIHARRVTIMPRDMQLARRLRGEGAGEPTLLGNLAL.

Positions 1–16 (MARTKQTARKATAWQA) are enriched in low complexity. A disordered region spans residues 1–43 (MARTKQTARKATAWQAPRKPLATKAARKRASPTGGIKKPHRYK). Arginine 3 carries the post-translational modification Asymmetric dimethylarginine. Arginine 3 carries the citrulline; alternate modification. Threonine 4 carries the post-translational modification Phosphothreonine. Lysine 5 carries the allysine; alternate modification. Lysine 5 carries the N6,N6,N6-trimethyllysine; alternate modification. Position 5 is an N6,N6-dimethyllysine; alternate (lysine 5). Lysine 5 bears the N6-(2-hydroxyisobutyryl)lysine; alternate mark. Lysine 5 carries the post-translational modification N6-(beta-hydroxybutyryl)lysine; alternate. Lysine 5 carries the N6-acetyllysine; alternate modification. An N6-crotonyllysine; alternate modification is found at lysine 5. Residue lysine 5 is modified to N6-methyllysine; alternate. Position 6 is a 5-glutamyl dopamine; alternate (glutamine 6). At glutamine 6 the chain carries 5-glutamyl serotonin; alternate. Position 7 is a phosphothreonine (threonine 7). A Citrulline; alternate modification is found at arginine 9. Arginine 9 bears the Symmetric dimethylarginine mark. Lysine 10 bears the N6,N6,N6-trimethyllysine; alternate mark. Lysine 10 is modified (N6,N6-dimethyllysine; alternate). Lysine 10 carries the N6-(2-hydroxyisobutyryl)lysine; alternate modification. Lysine 10 is subject to N6-(beta-hydroxybutyryl)lysine; alternate. Lysine 10 carries the N6-acetyllysine; alternate modification. Lysine 10 carries the post-translational modification N6-crotonyllysine; alternate. Residue lysine 10 is modified to N6-methyllysine; alternate. An N6-butyryllysine; alternate modification is found at lysine 10. Lysine 10 bears the N6-lactoyllysine; alternate mark. Threonine 12 is subject to Phosphothreonine. The residue at position 18 (arginine 18) is an Asymmetric dimethylarginine. Arginine 18 carries the citrulline; alternate modification. Residues lysine 19 and lysine 24 each carry the N6-(2-hydroxyisobutyryl)lysine; alternate modification. Lysine 19 and lysine 24 each carry N6-(beta-hydroxybutyryl)lysine; alternate. N6-acetyllysine; alternate is present on residues lysine 19 and lysine 24. Residues lysine 19 and lysine 24 each carry the N6-crotonyllysine; alternate modification. Lysine 19 and lysine 24 each carry N6-methyllysine; alternate. Lysine 19 and lysine 24 each carry N6-butyryllysine; alternate. An N6-lactoyllysine; alternate mark is found at lysine 19 and lysine 24. An N6-glutaryllysine; alternate mark is found at lysine 19 and lysine 24. A Citrulline modification is found at arginine 27. Lysine 28 and lysine 37 each carry N6,N6,N6-trimethyllysine; alternate. An N6,N6-dimethyllysine; alternate mark is found at lysine 28 and lysine 37. An N6-(2-hydroxyisobutyryl)lysine; alternate mark is found at lysine 28 and lysine 37. Residue lysine 28 is modified to N6-(beta-hydroxybutyryl)lysine; alternate. 2 positions are modified to N6-acetyllysine; alternate: lysine 28 and lysine 37. Lysine 28 carries the N6-crotonyllysine; alternate modification. An N6-methyllysine; alternate mark is found at lysine 28 and lysine 37. An N6-lactoyllysine; alternate modification is found at lysine 28. At lysine 28 the chain carries N6-glutaryllysine; alternate. Lysine 38 carries the post-translational modification N6-methyllysine. The residue at position 42 (tyrosine 42) is a Phosphotyrosine. Lysine 57 is modified (N6,N6,N6-trimethyllysine; alternate). Lysine 57 carries the N6-(2-hydroxyisobutyryl)lysine; alternate modification. Position 57 is an N6-(beta-hydroxybutyryl)lysine; alternate (lysine 57). At lysine 57 the chain carries N6-acetyllysine; alternate. Residue lysine 57 is modified to N6-crotonyllysine; alternate. Position 57 is an N6-lactoyllysine; alternate (lysine 57). Lysine 57 carries the N6-glutaryllysine; alternate modification. Lysine 57 is modified (N6-methyllysine). Lysine 57 carries the N6-succinyllysine; alternate modification. The residue at position 58 (serine 58) is a Phosphoserine. Residue lysine 65 is modified to N6-(2-hydroxyisobutyryl)lysine; alternate. Lysine 65 is modified (N6-methyllysine; alternate). Serine 87 is modified (phosphoserine). A Phosphothreonine modification is found at threonine 108.

The protein belongs to the histone H3 family. As to quaternary structure, the nucleosome is a histone octamer containing two molecules each of H2A, H2B, H3 and H4 assembled in one H3-H4 heterotetramer and two H2A-H2B heterodimers. The octamer wraps approximately 147 bp of DNA. Post-translationally, acetylation is generally linked to gene activation. Acetylation on Lys-10 (H3K9ac) impairs methylation at Arg-9 (H3R8me2s). Acetylation on Lys-19 (H3K18ac) and Lys-24 (H3K24ac) favors methylation at Arg-18 (H3R17me). In terms of processing, citrullination at Arg-9 (H3R8ci) and/or Arg-18 (H3R17ci) impairs methylation and represses transcription. Asymmetric dimethylation at Arg-18 (H3R17me2a) is linked to gene activation. Symmetric dimethylation at Arg-9 (H3R8me2s) is linked to gene repression. Asymmetric dimethylation at Arg-3 (H3R2me2a) is linked to gene repression and is mutually exclusive with H3 Lys-5 methylation (H3K4me2 and H3K4me3). H3R2me2a is present at the 3' of genes regardless of their transcription state and is enriched on inactive promoters, while it is absent on active promoters. Post-translationally, methylation at Lys-5 (H3K4me) facilitates subsequent acetylation of H3 and H4. Methylation at Lys-10 (H3K9me) and Lys-28 (H3K27me), which are linked to gene repression, are underrepresented. Methylation at Lys-10 (H3K9me) is a specific target for HP1 proteins (CBX1, CBX3 and CBX5) and prevents subsequent acetylation of H3 and H4. In terms of processing, phosphorylation at Thr-7 (H3T6ph) is a specific tag for epigenetic transcriptional activation that prevents demethylation of Lys-5 (H3K4me) by LSD1/KDM1A. At centromeres, specifically phosphorylated at Thr-12 (H3T11ph) from prophase to early anaphase. Phosphorylation at Thr-12 (H3T11ph) is a specific tag for epigenetic transcriptional activation that promotes demethylation of Lys-10 (H3K9me). Phosphorylation at Tyr-42 (H3Y41ph) promotes exclusion of CBX5 (HP1 alpha) from chromatin. Lysine deamination at Lys-5 (H3K4all) to form allysine. Allysine formation only takes place on H3K4me3 and results in gene repression. Post-translationally, crotonylation (Kcr) is specifically present in male germ cells and marks testis-specific genes in post-meiotic cells, including X-linked genes that escape sex chromosome inactivation in haploid cells. Crotonylation marks active promoters and enhancers and confers resistance to transcriptional repressors. It is also associated with post-meiotically activated genes on autosomes. In terms of processing, butyrylation of histones marks active promoters and competes with histone acetylation. It is present during late spermatogenesis. In terms of tissue distribution, expressed at low level in some tissues, such as testis and brain.

The protein localises to the nucleus. It localises to the chromosome. Functionally, primate-specific variant histone H3, which constitutes a core component of nucleosomes. Nucleosomes wrap and compact DNA into chromatin, limiting DNA accessibility to the cellular machineries which require DNA as a template. Histones thereby play a central role in transcription regulation, DNA repair, DNA replication and chromosomal stability. DNA accessibility is regulated via a complex set of post-translational modifications of histones, also called histone code, and nucleosome remodeling. The chain is Histone H3.X from Homo sapiens (Human).